The sequence spans 96 residues: Small ribosomal subunit protein bS6 (96 aa).

Belongs to the bacterial ribosomal protein bS6 family.

Binds together with bS18 to 16S ribosomal RNA. In Salinispora arenicola (strain CNS-205), this protein is Small ribosomal subunit protein bS6.